We begin with the raw amino-acid sequence, 321 residues long: Anthranilate phosphoribosyltransferase (321 aa).

Residues glycine 72, 75–76 (GD), threonine 80, 82–85 (NVST), 99–107 (KHGNVSITS), and serine 111 contribute to the 5-phospho-alpha-D-ribose 1-diphosphate site. Glycine 72 lines the anthranilate pocket. Serine 84 contributes to the Mg(2+) binding site. Asparagine 102 is a binding site for anthranilate. An anthranilate-binding site is contributed by arginine 157. Positions 216 and 217 each coordinate Mg(2+).

Belongs to the anthranilate phosphoribosyltransferase family. In terms of assembly, homodimer. Mg(2+) serves as cofactor.

The enzyme catalyses N-(5-phospho-beta-D-ribosyl)anthranilate + diphosphate = 5-phospho-alpha-D-ribose 1-diphosphate + anthranilate. It functions in the pathway amino-acid biosynthesis; L-tryptophan biosynthesis; L-tryptophan from chorismate: step 2/5. Its function is as follows. Catalyzes the transfer of the phosphoribosyl group of 5-phosphorylribose-1-pyrophosphate (PRPP) to anthranilate to yield N-(5'-phosphoribosyl)-anthranilate (PRA). This chain is Anthranilate phosphoribosyltransferase, found in Methanococcus maripaludis (strain C5 / ATCC BAA-1333).